Reading from the N-terminus, the 530-residue chain is Type 2 DNA topoisomerase 6 subunit B (530 aa).

Residues asparagine 42, aspartate 76, 97-98 (SK), 106-113 (GMYGLGVK), and lysine 427 contribute to the ATP site.

This sequence belongs to the TOP6B family. In terms of assembly, homodimer. Heterotetramer of two Top6A and two Top6B chains.

The catalysed reaction is ATP-dependent breakage, passage and rejoining of double-stranded DNA.. Its function is as follows. Relaxes both positive and negative superturns and exhibits a strong decatenase activity. This is Type 2 DNA topoisomerase 6 subunit B from Saccharolobus islandicus (strain M.16.4 / Kamchatka #3) (Sulfolobus islandicus).